We begin with the raw amino-acid sequence, 206 residues long: Uridine kinase (206 aa).

11–18 (GGSASGKT) provides a ligand contact to ATP.

It belongs to the uridine kinase family.

Its subcellular location is the cytoplasm. It carries out the reaction uridine + ATP = UMP + ADP + H(+). It catalyses the reaction cytidine + ATP = CMP + ADP + H(+). The protein operates within pyrimidine metabolism; CTP biosynthesis via salvage pathway; CTP from cytidine: step 1/3. It functions in the pathway pyrimidine metabolism; UMP biosynthesis via salvage pathway; UMP from uridine: step 1/1. The polypeptide is Uridine kinase (Lactococcus lactis subsp. cremoris (strain MG1363)).